Reading from the N-terminus, the 602-residue chain is MEISLVPLENGSAMTLRGGGEAGASCVQTPRGECGCPPTSGLNNQSKETLLRGRTTLEDANQGGRPLPPMAQELPQPRRLSAEDEEGEGDPGLGTVEEDQAPQDAGSLHHQRVLINISGLRFETQLGTLAQFPNTLLGDPAKRLHYFDPLRNEYFFDRNRPSFDGILYYYQSGGRLRRPVNVSLDVFADEIRFYQLGDEAMERFREDEGFIKEEEKPLPRNEFQRQVWLIFEYPESSGSARAIAIVSVLVILISIITFCLETLPEFRDERELLRHPPVPPQPPAPAPGINGSVSGALSSGPTVAPLLPRTLADPFFIVETTCVIWFTFELLVRFFACPSKAEFSRNIMNIIDVVAIFPYFITLGTELAEQQPGGGGQNGQQAMSLAILRVIRLVRVFRIFKLSRHSKGLQILGKTLQASMRELGLLIFFLFIGVILFSSAVYFAEADNHGSHFSSIPDAFWWAVVTMTTVGYGDMRPITVGGKIVGSLCAIAGVLTIALPVPVIVSNFNYFYHRETDHEEQAALKEEQGNQRRESGLDTGGQRKVSCSKASFCKTGGSLESSDSIRRGSCPLEKCHLKAKSNVDLRRSLYALCLDTSRETDL.

Residues 1 to 202 form a tetramerization domain region; the sequence is MEISLVPLEN…FYQLGDEAME (202 aa). Residues 1–238 lie on the Cytoplasmic side of the membrane; the sequence is MEISLVPLEN…LIFEYPESSG (238 aa). The tract at residues 58 to 107 is disordered; sequence EDANQGGRPLPPMAQELPQPRRLSAEDEEGEGDPGLGTVEEDQAPQDAGS. Ser-81 carries the post-translational modification Phosphoserine; by CK2 and PKA. Lys-212 participates in a covalent cross-link: Glycyl lysine isopeptide (Lys-Gly) (interchain with G-Cter in SUMO). Residues 239–260 form a helical membrane-spanning segment; that stretch reads SARAIAIVSVLVILISIITFCL. Over 261 to 314 the chain is Extracellular; that stretch reads ETLPEFRDERELLRHPPVPPQPPAPAPGINGSVSGALSSGPTVAPLLPRTLADP. Residues 315-336 traverse the membrane as a helical segment; sequence FFIVETTCVIWFTFELLVRFFA. A lipid anchor (S-palmitoyl cysteine) is attached at Cys-337. The Cytoplasmic portion of the chain corresponds to 337–347; that stretch reads CPSKAEFSRNI. Residues 348–368 traverse the membrane as a helical segment; sequence MNIIDVVAIFPYFITLGTELA. The Extracellular portion of the chain corresponds to 369 to 384; it reads EQQPGGGGQNGQQAMS. Residues 385–405 form a helical; Voltage-sensor membrane-spanning segment; sequence LAILRVIRLVRVFRIFKLSRH. Topologically, residues 406–420 are cytoplasmic; that stretch reads SKGLQILGKTLQASM. The tract at residues 407 to 420 is S4-S5 linker; the sequence is KGLQILGKTLQASM. Residues 421–442 traverse the membrane as a helical segment; that stretch reads RELGLLIFFLFIGVILFSSAVY. The Extracellular segment spans residues 443-456; that stretch reads FAEADNHGSHFSSI. The segment at residues 457–468 is an intramembrane region (helical); it reads PDAFWWAVVTMT. Residues 469–474 carry the Selectivity filter motif; sequence TVGYGD. Residues 469 to 476 lie within the membrane without spanning it; that stretch reads TVGYGDMR. Residues 477–483 lie on the Extracellular side of the membrane; sequence PITVGGK. Residues 484-512 traverse the membrane as a helical segment; that stretch reads IVGSLCAIAGVLTIALPVPVIVSNFNYFY. Residues 513–602 lie on the Cytoplasmic side of the membrane; it reads HRETDHEEQA…CLDTSRETDL (90 aa). Residues 523-536 are compositionally biased toward basic and acidic residues; the sequence is ALKEEQGNQRRESG. A disordered region spans residues 523–543; sequence ALKEEQGNQRRESGLDTGGQR. Residue Lys-525 forms a Glycyl lysine isopeptide (Lys-Gly) (interchain with G-Cter in SUMO) linkage. 3 positions are modified to phosphoserine; by PKA: Ser-535, Ser-546, and Ser-569. Positions 600-602 match the PDZ-binding motif; it reads TDL.

Belongs to the potassium channel family. A (Shaker) (TC 1.A.1.2) subfamily. Kv1.5/KCNA5 sub-subfamily. As to quaternary structure, homotetramer and heterotetramer of potassium channel proteins. Interacts with DLG1, which enhances channel currents. Forms a ternary complex with DLG1 and CAV3. Interacts with KCNAB1. Interacts with UBE2I. Interacts with XIRP2; the interaction is required for normal action potential configuration in the heart. In terms of processing, glycosylated. Sumoylated on Lys-212, and Lys-525, preferentially with SUMO3. Sumoylation regulates the voltage sensitivity of the channel. As to expression, expressed equally in atrium, ventricle, aorta and skeletal muscle. Weaker expression in brain.

Its subcellular location is the cell membrane. It catalyses the reaction K(+)(in) = K(+)(out). In terms of biological role, voltage-gated potassium channel that mediates transmembrane potassium transport in excitable membranes. Forms tetrameric potassium-selective channels through which potassium ions pass in accordance with their electrochemical gradient. The channel alternates between opened and closed conformations in response to the voltage difference across the membrane. Can form functional homotetrameric channels and heterotetrameric channels that contain variable proportions of KCNA1, KCNA2, KCNA4, KCNA5, and possibly other family members as well; channel properties depend on the type of alpha subunits that are part of the channel. Channel properties are modulated by cytoplasmic beta subunits that regulate the subcellular location of the alpha subunits and promote rapid inactivation. Homotetrameric channels display rapid activation and slow inactivation. Required for normal electrical conduction including formation of the infranodal ventricular conduction system and normal action potential configuration, as a result of its interaction with XIRP2. May play a role in regulating the secretion of insulin in normal pancreatic islets. This chain is Potassium voltage-gated channel subfamily A member 5 (Kcna5), found in Rattus norvegicus (Rat).